The sequence spans 92 residues: Progonadoliberin-1 (92 aa).

The N-terminal stretch at 1-23 is a signal peptide; that stretch reads MELVPKFLAGLILLTLCVGGCYA. Gln-24 bears the Pyrrolidone carboxylic acid mark. Residue Gly-33 is modified to Glycine amide.

This sequence belongs to the GnRH family.

It localises to the secreted. In terms of biological role, stimulates the secretion of gonadotropins; it stimulates the secretion of both luteinizing and follicle-stimulating hormones. The polypeptide is Progonadoliberin-1 (GNRH1) (Tupaia belangeri (Common tree shrew)).